The primary structure comprises 61 residues: QHWSYGLRPGGKRNAKNVIDSFQEIAKEVDQPVEPKCCGCIVHQSHSPLRDLKAALESLIE.

Gln1 carries the pyrrolidone carboxylic acid modification. At Gly10 the chain carries Glycine amide.

This sequence belongs to the GnRH family.

It is found in the secreted. Its function is as follows. Stimulates the secretion of gonadotropins; it stimulates the secretion of both luteinizing and follicle-stimulating hormones. In Ovis aries (Sheep), this protein is Progonadoliberin-1 (GNRH1).